A 160-amino-acid chain; its full sequence is 2-amino-4-hydroxy-6-hydroxymethyldihydropteridine pyrophosphokinase (160 aa).

This sequence belongs to the HPPK family.

The enzyme catalyses 6-hydroxymethyl-7,8-dihydropterin + ATP = (7,8-dihydropterin-6-yl)methyl diphosphate + AMP + H(+). The protein operates within cofactor biosynthesis; tetrahydrofolate biosynthesis; 2-amino-4-hydroxy-6-hydroxymethyl-7,8-dihydropteridine diphosphate from 7,8-dihydroneopterin triphosphate: step 4/4. Functionally, catalyzes the transfer of pyrophosphate from adenosine triphosphate (ATP) to 6-hydroxymethyl-7,8-dihydropterin, an enzymatic step in folate biosynthesis pathway. The chain is 2-amino-4-hydroxy-6-hydroxymethyldihydropteridine pyrophosphokinase (folK) from Aquifex aeolicus (strain VF5).